Reading from the N-terminus, the 236-residue chain is Adenylate dimethylallyltransferase (236 aa).

The protein belongs to the isopentenyl transferase family.

It catalyses the reaction dimethylallyl diphosphate + AMP = N(6)-(dimethylallyl)adenosine 5'-phosphate + diphosphate. Transfers dimethylallyl groups to AMP as part of the biosynthesis of cytokinin phytohormones. This Pantoea agglomerans pv. gypsophilae (Erwinia herbicola) protein is Adenylate dimethylallyltransferase (ipt).